We begin with the raw amino-acid sequence, 113 residues long: Putative pterin-4-alpha-carbinolamine dehydratase (113 aa).

Belongs to the pterin-4-alpha-carbinolamine dehydratase family.

The enzyme catalyses (4aS,6R)-4a-hydroxy-L-erythro-5,6,7,8-tetrahydrobiopterin = (6R)-L-erythro-6,7-dihydrobiopterin + H2O. The protein is Putative pterin-4-alpha-carbinolamine dehydratase of Chlorobium limicola (strain DSM 245 / NBRC 103803 / 6330).